Reading from the N-terminus, the 347-residue chain is Biotin synthase (347 aa).

Positions 40-258 (AQVQVSTLLS…IAVARIVMPR (219 aa)) constitute a Radical SAM core domain. Cys-55, Cys-59, and Cys-62 together coordinate [4Fe-4S] cluster. Cys-99, Cys-130, Cys-190, and Arg-262 together coordinate [2Fe-2S] cluster.

This sequence belongs to the radical SAM superfamily. Biotin synthase family. Homodimer. It depends on [4Fe-4S] cluster as a cofactor. [2Fe-2S] cluster serves as cofactor.

The enzyme catalyses (4R,5S)-dethiobiotin + (sulfur carrier)-SH + 2 reduced [2Fe-2S]-[ferredoxin] + 2 S-adenosyl-L-methionine = (sulfur carrier)-H + biotin + 2 5'-deoxyadenosine + 2 L-methionine + 2 oxidized [2Fe-2S]-[ferredoxin]. It functions in the pathway cofactor biosynthesis; biotin biosynthesis; biotin from 7,8-diaminononanoate: step 2/2. Its function is as follows. Catalyzes the conversion of dethiobiotin (DTB) to biotin by the insertion of a sulfur atom into dethiobiotin via a radical-based mechanism. This Stenotrophomonas maltophilia (strain R551-3) protein is Biotin synthase.